Here is an 87-residue protein sequence, read N- to C-terminus: Small ribosomal subunit protein bS18B (87 aa).

The protein belongs to the bacterial ribosomal protein bS18 family. As to quaternary structure, part of the 30S ribosomal subunit. Forms a tight heterodimer with protein bS6.

Functionally, binds as a heterodimer with protein bS6 to the central domain of the 16S rRNA, where it helps stabilize the platform of the 30S subunit. The sequence is that of Small ribosomal subunit protein bS18B from Mycobacterium marinum (strain ATCC BAA-535 / M).